A 348-amino-acid polypeptide reads, in one-letter code: Centromere protein N (348 aa).

It belongs to the CENP-N/CHL4 family.

Its subcellular location is the nucleus. It is found in the chromosome. The protein localises to the centromere. Its function is as follows. Probable component of a centromeric complex involved in assembly of kinetochore proteins, mitotic progression and chromosome segregation. The protein is Centromere protein N (cenpn) of Xenopus tropicalis (Western clawed frog).